The primary structure comprises 56 residues: Small ribosomal subunit protein uS14 (56 aa).

Positions 21, 24, 39, and 42 each coordinate Zn(2+).

It belongs to the universal ribosomal protein uS14 family. The cofactor is Zn(2+).

This is Small ribosomal subunit protein uS14 (RPS29) from Triticum aestivum (Wheat).